Reading from the N-terminus, the 365-residue chain is Histidinol-phosphate aminotransferase (365 aa).

K227 carries the post-translational modification N6-(pyridoxal phosphate)lysine.

It belongs to the class-II pyridoxal-phosphate-dependent aminotransferase family. Histidinol-phosphate aminotransferase subfamily. Homodimer. Pyridoxal 5'-phosphate serves as cofactor.

The catalysed reaction is L-histidinol phosphate + 2-oxoglutarate = 3-(imidazol-4-yl)-2-oxopropyl phosphate + L-glutamate. It participates in amino-acid biosynthesis; L-histidine biosynthesis; L-histidine from 5-phospho-alpha-D-ribose 1-diphosphate: step 7/9. The chain is Histidinol-phosphate aminotransferase from Campylobacter concisus (strain 13826).